A 284-amino-acid polypeptide reads, in one-letter code: Co-chaperone protein DjlA (284 aa).

Residues 1 to 6 (MHIFGK) are Periplasmic-facing. Residues 7-30 (ILGAFFGFLFGGPFGAIFGIFLGH) traverse the membrane as a helical segment. The Cytoplasmic portion of the chain corresponds to 31–284 (QFDKARRLNQ…ELIRKEKGIK (254 aa)). Residues 190-211 (QGGGFGGSQQQSHSGQQWQQPS) are disordered. The segment covering 197–211 (SQQQSHSGQQWQQPS) has biased composition (low complexity). The J domain maps to 218 to 284 (DAYEVLGVSE…ELIRKEKGIK (67 aa)).

As to quaternary structure, homodimer.

The protein resides in the cell inner membrane. In terms of biological role, regulatory DnaK co-chaperone. Direct interaction between DnaK and DjlA is needed for the induction of the wcaABCDE operon, involved in the synthesis of a colanic acid polysaccharide capsule, possibly through activation of the RcsB/RcsC phosphotransfer signaling pathway. The colanic acid capsule may help the bacterium survive conditions outside the host. The chain is Co-chaperone protein DjlA from Vibrio cholerae serotype O1 (strain ATCC 39315 / El Tor Inaba N16961).